The following is a 53-amino-acid chain: Mitochondrial sheath formation-associated protein (53 aa).

Mitochondrial intermembrane segments follow at residues 1 to 6 (MIVLGW) and 1 to 7 (MIVLGWM). 2 consecutive transmembrane segments (helical) span residues 7-23 (MLFV…PEAM) and 8-24 (LFVG…EAMP). Cytoplasmic segments lie at residues 24–53 (PPTL…ELLL) and 25–40 (PTLK…ENKA).

In terms of assembly, interacts with VDAC3. As to expression, testis specific. Detected only in germ cells at the step of spermiogenesis (at protein level). Expressed during the middle steps of spermatid development. Testis specific. Detected only in germ cells at the step of spermiogenesis (at protein level). Expressed in the late steps of spermatid development.

It localises to the mitochondrion outer membrane. Its function is as follows. Regulates sperm development. May be involved in mitochondrial sheath formation. The chain is Mitochondrial sheath formation-associated protein from Mus musculus (Mouse).